The primary structure comprises 427 residues: Putative F-box protein At3g44060 (427 aa).

Residues 1–46 form the F-box domain; that stretch reads MDCLPDDLLVQILYLLPTKEAVSTSVLSKRWRTLFTRSDNLDFHDP.

The sequence is that of Putative F-box protein At3g44060 from Arabidopsis thaliana (Mouse-ear cress).